The primary structure comprises 99 residues: Aspartyl/glutamyl-tRNA(Asn/Gln) amidotransferase subunit C (99 aa).

This sequence belongs to the GatC family. In terms of assembly, heterotrimer of A, B and C subunits.

The catalysed reaction is L-glutamyl-tRNA(Gln) + L-glutamine + ATP + H2O = L-glutaminyl-tRNA(Gln) + L-glutamate + ADP + phosphate + H(+). The enzyme catalyses L-aspartyl-tRNA(Asn) + L-glutamine + ATP + H2O = L-asparaginyl-tRNA(Asn) + L-glutamate + ADP + phosphate + 2 H(+). In terms of biological role, allows the formation of correctly charged Asn-tRNA(Asn) or Gln-tRNA(Gln) through the transamidation of misacylated Asp-tRNA(Asn) or Glu-tRNA(Gln) in organisms which lack either or both of asparaginyl-tRNA or glutaminyl-tRNA synthetases. The reaction takes place in the presence of glutamine and ATP through an activated phospho-Asp-tRNA(Asn) or phospho-Glu-tRNA(Gln). The sequence is that of Aspartyl/glutamyl-tRNA(Asn/Gln) amidotransferase subunit C from Mycobacterium marinum (strain ATCC BAA-535 / M).